A 313-amino-acid chain; its full sequence is Ribosomal RNA small subunit methyltransferase H (313 aa).

S-adenosyl-L-methionine-binding positions include 35–37 (GGH), Asp-55, Phe-81, Asp-103, and Gln-110.

Belongs to the methyltransferase superfamily. RsmH family.

It localises to the cytoplasm. The catalysed reaction is cytidine(1402) in 16S rRNA + S-adenosyl-L-methionine = N(4)-methylcytidine(1402) in 16S rRNA + S-adenosyl-L-homocysteine + H(+). In terms of biological role, specifically methylates the N4 position of cytidine in position 1402 (C1402) of 16S rRNA. The sequence is that of Ribosomal RNA small subunit methyltransferase H from Pseudomonas paraeruginosa (strain DSM 24068 / PA7) (Pseudomonas aeruginosa (strain PA7)).